The following is a 272-amino-acid chain: WIMGHMVNAIWQIDQFMDLGVNSIEFDINFDKSANPIYTYHGVPCDCFRSCLKWEYFGDFLTALRHRTTPGDKLYKEKLILFVFDMKTNSLYDNQAYTAGVNMANNIFKYYWNNGNNGGRSYFILSIPNLNHYNLIKGFQETIKSKGHPELLEKVGYDFSANDDIPDVEKAYQKVGVTGHVWQSDGITNCLPRTLTRVQAAVKERDSGGVINKVYYWTADKYSTTRDALDAGVDGIMTNYPYVLNDVLKENAYKNKFRLANYEDNPWVTFKP.

The active site involves H5. Mg(2+)-binding residues include E25 and D27. H41 acts as the Nucleophile in catalysis. 2 cysteine pairs are disulfide-bonded: C45-C51 and C47-C190. Mg(2+) is bound at residue D85.

The protein belongs to the arthropod phospholipase D family. Class II subfamily. Mg(2+) serves as cofactor. In terms of tissue distribution, expressed by the venom gland.

The protein resides in the secreted. The catalysed reaction is an N-(acyl)-sphingosylphosphocholine = an N-(acyl)-sphingosyl-1,3-cyclic phosphate + choline. The enzyme catalyses an N-(acyl)-sphingosylphosphoethanolamine = an N-(acyl)-sphingosyl-1,3-cyclic phosphate + ethanolamine. It carries out the reaction a 1-acyl-sn-glycero-3-phosphocholine = a 1-acyl-sn-glycero-2,3-cyclic phosphate + choline. It catalyses the reaction a 1-acyl-sn-glycero-3-phosphoethanolamine = a 1-acyl-sn-glycero-2,3-cyclic phosphate + ethanolamine. Functionally, dermonecrotic toxins cleave the phosphodiester linkage between the phosphate and headgroup of certain phospholipids (sphingolipid and lysolipid substrates), forming an alcohol (often choline) and a cyclic phosphate. This toxin acts on sphingomyelin (SM). It may also act on ceramide phosphoethanolamine (CPE), lysophosphatidylcholine (LPC) and lysophosphatidylethanolamine (LPE), but not on lysophosphatidylserine (LPS), and lysophosphatidylglycerol (LPG). It acts by transphosphatidylation, releasing exclusively cyclic phosphate products as second products. Induces dermonecrosis, hemolysis, increased vascular permeability, edema, inflammatory response, and platelet aggregation. The sequence is that of Dermonecrotic toxin LspaSicTox-alphaII1 from Loxosceles spadicea (Recluse spider).